We begin with the raw amino-acid sequence, 426 residues long: MKLQKPKGTQDILPGDSAKWQYVENVARETFKKYNYGEIRTPMFEHYEVISRSVGDTTDIVTKEMYDFHDKGDRHITLRPEGTAPVVRSYVENKLFAPEVQKPVKVYYIGSMFRYERPQAGRLREFHQLGVECFGSKNPATDVETIAMAYQLFNTLGIKDVTLHLNSLGNTDSRLAYRQALIDYLTPMRESLSKDSQRRLEENPLRVLDSKEKEDKVAVENAPSILDYLDEESQTHFDEVRAMLDSLNIPYVIDTNMVRGLDYYNHTIFEFITNIDKSELTICAGGRYDSLVEYFGGPETAGFGFGLGLERLLLVLDKQGIKLPVEESLDVYIAVLGSGANGKALELVQSIRYQGFKAERDYLGRKIKAQFKSADTFKAKTVITLGESEVESGVVKVKNNATREEVTVSFEELTTNFATVLKQLEK.

It belongs to the class-II aminoacyl-tRNA synthetase family. In terms of assembly, homodimer.

It localises to the cytoplasm. The enzyme catalyses tRNA(His) + L-histidine + ATP = L-histidyl-tRNA(His) + AMP + diphosphate + H(+). The protein is Histidine--tRNA ligase of Streptococcus thermophilus (strain CNRZ 1066).